The chain runs to 122 residues: Large ribosomal subunit protein uL14 (122 aa).

The protein belongs to the universal ribosomal protein uL14 family. In terms of assembly, part of the 50S ribosomal subunit. Forms a cluster with proteins L3 and L19. In the 70S ribosome, L14 and L19 interact and together make contacts with the 16S rRNA in bridges B5 and B8.

Functionally, binds to 23S rRNA. Forms part of two intersubunit bridges in the 70S ribosome. The protein is Large ribosomal subunit protein uL14 of Halorhodospira halophila (strain DSM 244 / SL1) (Ectothiorhodospira halophila (strain DSM 244 / SL1)).